A 61-amino-acid polypeptide reads, in one-letter code: Chi-conotoxin MrIA (61 aa).

The first 19 residues, 1–19, serve as a signal peptide directing secretion; the sequence is MRCLPVLIILLLLTASAPG. The propeptide occupies 20-48; it reads VVVLPKTEDDVPMSSVYGNGKSILRGILR. 2 cysteine pairs are disulfide-bonded: C52/C61 and C53/C58. P60 is subject to 4-hydroxyproline.

This sequence belongs to the conotoxin T superfamily. In terms of tissue distribution, expressed by the venom duct.

The protein resides in the secreted. Functionally, chi-conotoxins inhibit the neuronal noradrenaline transporter (NET/SLC6A2). Activity has been described on both human (inhibition of norepinephrine uptake is IC(50)=1.26 uM) and rat (pIC(50)=6.21 corresponding IC(50)=0.16 uM) transporters. Acts as a reversible non-competitive inhibitor. This Conus marmoreus (Marble cone) protein is Chi-conotoxin MrIA.